Here is an 800-residue protein sequence, read N- to C-terminus: Isoamylase 2, chloroplastic (800 aa).

Pro residues predominate over residues 1-10 (MASLPAPPTP). Residues 1 to 22 (MASLPAPPTPLGSCPRGRGGGR) are disordered. The transit peptide at 1–34 (MASLPAPPTPLGSCPRGRGGGRVVARPRRAGLAC) directs the protein to the chloroplast.

It belongs to the glycosyl hydrolase 13 family. Forms a hetero-hexamer composed of five ISA1 and one ISA2. Highly expressed in developing endosperm and leaves.

Its subcellular location is the plastid. It is found in the chloroplast. The enzyme catalyses Hydrolysis of (1-&gt;6)-alpha-D-glucosidic branch linkages in glycogen, amylopectin and their beta-limit dextrins.. Functionally, starch-debranching enzyme involved in amylopectin biosynthesis in endosperm. Functions by removing excess branches or improper branches that interfere with the formation of double helices of the cluster chains of amylopectin and crystallization of starch. Works together with ISA1 as heterooligomer. The heterooligomer ISA1 and ISA2 possesses higher affinity than the ISA1 homooligomer for various branched polyglucans in vitro, but no marked differences exist in chain preferences for debranching of amylopectin and phytoglycogen between these forms. The sequence is that of Isoamylase 2, chloroplastic from Oryza sativa subsp. japonica (Rice).